A 241-amino-acid chain; its full sequence is Ureidoacrylate amidohydrolase RutB (241 aa).

The active-site Proton acceptor is the Asp-38. The active site involves Lys-147. Residue Cys-180 is the Nucleophile of the active site.

The protein belongs to the isochorismatase family. RutB subfamily.

It carries out the reaction (Z)-3-ureidoacrylate + H2O + H(+) = (Z)-3-aminoacrylate + NH4(+) + CO2. The catalysed reaction is (Z)-3-ureidoacrylate + H2O = (Z)-3-aminoacrylate + carbamate + H(+). The enzyme catalyses (Z)-2-methylureidoacrylate + H2O + H(+) = (Z)-2-methylaminoacrylate + NH4(+) + CO2. Functionally, hydrolyzes ureidoacrylate to form aminoacrylate and carbamate. The carbamate hydrolyzes spontaneously, thereby releasing one of the nitrogen atoms of the pyrimidine ring as ammonia and one of its carbon atoms as CO2. This Haliangium ochraceum (strain DSM 14365 / JCM 11303 / SMP-2) protein is Ureidoacrylate amidohydrolase RutB.